The chain runs to 733 residues: tRNA (guanine(27)-N(2))-dimethyltransferase (733 aa).

A compositionally biased stretch (acidic residues) spans 1-18 (MENMAEEELLPLEKEEVE). A disordered region spans residues 1-78 (MENMAEEELL…LASAPEEAKS (78 aa)). Threonine 26 is subject to Phosphothreonine. Low complexity-rich tracts occupy residues 39–49 (PDSALDSAPTP) and 57–73 (PALA…ASAP). Serine 66 bears the Phosphoserine mark. The Nucleolar localization signal motif lies at 135–139 (HKLRR). Residues 184–206 (YHCIICSATITRRTDMLGHVRRH) form a C2H2-type zinc finger. The Trm1 methyltransferase domain occupies 227 to 688 (EILKEADTDV…APLMQFKSIL (462 aa)). Positions 260, 307, 357, and 358 each coordinate S-adenosyl-L-methionine. Zn(2+)-binding residues include cysteine 488, cysteine 491, cysteine 513, and cysteine 515. Lysine 585 is covalently cross-linked (Glycyl lysine isopeptide (Lys-Gly) (interchain with G-Cter in SUMO2)). Phosphoserine is present on residues serine 612 and serine 707.

It belongs to the class I-like SAM-binding methyltransferase superfamily. Trm1 family. In terms of tissue distribution, widely expressed.

The protein localises to the nucleus. The protein resides in the nucleolus. The enzyme catalyses guanosine(27) in tRNA(Tyr) + 2 S-adenosyl-L-methionine = N(2)-dimethylguanosine(27) in tRNA(Tyr) + 2 S-adenosyl-L-homocysteine + 2 H(+). In terms of biological role, specifically dimethylates a single guanine residue at position 27 of tRNA(Tyr) using S-adenosyl-L-methionine as donor of the methyl groups. Dimethylation at position 27 of tRNA(Tyr) is required for efficient translation of tyrosine codons. Also required to maintain 3-(3-amino-3-carboxypropyl)uridine (acp3U) in the D-loop of several cytoplasmic tRNAs. This chain is tRNA (guanine(27)-N(2))-dimethyltransferase, found in Homo sapiens (Human).